The following is a 145-amino-acid chain: Large ribosomal subunit protein uL15 (145 aa).

The disordered stretch occupies residues 1–50 (MLHTIKPVTNARKSTKRLGRGPGSGTGKTSGKGHKGQLARSGKTLRPGFE). Over residues 20-30 (RGPGSGTGKTS) the composition is skewed to gly residues.

This sequence belongs to the universal ribosomal protein uL15 family. Part of the 50S ribosomal subunit.

Its function is as follows. Binds to the 23S rRNA. The chain is Large ribosomal subunit protein uL15 from Aster yellows witches'-broom phytoplasma (strain AYWB).